Consider the following 81-residue polypeptide: MKAIIVFILFISSVHAMSKCNQAIYLNLDPHCGILPDCNLDGPNPSYLKRVSCERKENGKPGFIELIPGKCLHGKPRCSLK.

The N-terminal stretch at 1-16 (MKAIIVFILFISSVHA) is a signal peptide.

Main cells of accessory gland and seminal fluid.

It is found in the secreted. Its function is as follows. Responsible for physiological and behavioral changes in mated female flies. The protein is Accessory gland protein Acp63F (Acp63F) of Drosophila melanogaster (Fruit fly).